Here is a 520-residue protein sequence, read N- to C-terminus: Amine oxidase [flavin-containing] B (520 aa).

Ser-2 carries the N-acetylserine modification. Topologically, residues 2–489 are cytoplasmic; it reads SGKCDVVVVG…TFLERHLPSV (488 aa). Lys-52 carries the N6-acetyllysine modification. Position 397 is an S-8alpha-FAD cysteine (Cys-397). Residues 490 to 516 form a helical; Anchor for type IV membrane protein membrane-spanning segment; that stretch reads PGLLRLIGLTAIFSATALGVLAHKRGL. The Mitochondrial intermembrane segment spans residues 517–520; sequence LVRV.

It belongs to the flavin monoamine oxidase family. In terms of assembly, monomer, homo- or heterodimer (containing two subunits of similar size). Each subunit contains a covalently bound flavin. Enzymatically active as monomer. FAD serves as cofactor.

The protein resides in the mitochondrion outer membrane. The catalysed reaction is a secondary aliphatic amine + O2 + H2O = a primary amine + an aldehyde + H2O2. It catalyses the reaction (R)-adrenaline + O2 + H2O = (R)-3,4-dihydroxymandelaldehyde + methylamine + H2O2. It carries out the reaction a primary methyl amine + O2 + H2O = an aldehyde + H2O2 + NH4(+). The enzyme catalyses benzylamine + O2 + H2O = benzaldehyde + H2O2 + NH4(+). The catalysed reaction is dopamine + O2 + H2O = 3,4-dihydroxyphenylacetaldehyde + H2O2 + NH4(+). It catalyses the reaction tyramine + O2 + H2O = (4-hydroxyphenyl)acetaldehyde + H2O2 + NH4(+). It carries out the reaction (R)-noradrenaline + O2 + H2O = (R)-3,4-dihydroxymandelaldehyde + H2O2 + NH4(+). The enzyme catalyses 2-phenylethylamine + O2 + H2O = 2-phenylacetaldehyde + H2O2 + NH4(+). The catalysed reaction is N-acetylputrescine + O2 + H2O = 4-acetamidobutanal + H2O2 + NH4(+). Functionally, catalyzes the oxidative deamination of primary and some secondary amines such as neurotransmitters, and exogenous amines including the tertiary amine, neurotoxin 1-methyl-4-phenyl-1,2,3,6-tetrahydropyridine (MPTP), with concomitant reduction of oxygen to hydrogen peroxide and participates in the metabolism of neuroactive and vasoactive amines in the central nervous system and peripheral tissues. Preferentially degrades benzylamine and phenylethylamine. The chain is Amine oxidase [flavin-containing] B from Canis lupus familiaris (Dog).